A 977-amino-acid chain; its full sequence is Ubiquitin-like modifier-activating enzyme 7 (977 aa).

The protein belongs to the ubiquitin-activating E1 family. Ubiquitinated by RNF170.

It localises to the cytoplasm. The protein resides in the nucleus. It participates in protein modification; protein ubiquitination. In terms of biological role, E1-activating enzyme that catalyzes the covalent conjugation of the ubiquitin-like protein product of ISG15 to additional interferons stimulated proteins (ISGs) as well as other cellular proteins such as P53 in a process termed protein ISGylation. Plays an essential role in antiviral immunity together with ISG15 by restricting the replication of many viruses including rabies virus, influenza virus, sindbis virus or rotavirus. The chain is Ubiquitin-like modifier-activating enzyme 7 from Mus musculus (Mouse).